Consider the following 704-residue polypeptide: Polyribonucleotide nucleotidyltransferase (704 aa).

Asp-488 and Asp-494 together coordinate Mg(2+). Positions 555-614 (PRITTIKINPEKIRDVIGKGGATIRALTEETGTTIELDDDGTVKIASSNGEATKEAIRRI) constitute a KH domain. Positions 624 to 692 (GTVYNGKVVR…RQGRVRLSMK (69 aa)) constitute an S1 motif domain.

Belongs to the polyribonucleotide nucleotidyltransferase family. In terms of assembly, component of the RNA degradosome, which is a multiprotein complex involved in RNA processing and mRNA degradation. Requires Mg(2+) as cofactor.

The protein resides in the cytoplasm. It carries out the reaction RNA(n+1) + phosphate = RNA(n) + a ribonucleoside 5'-diphosphate. Functionally, involved in mRNA degradation. Catalyzes the phosphorolysis of single-stranded polyribonucleotides processively in the 3'- to 5'-direction. The sequence is that of Polyribonucleotide nucleotidyltransferase from Shewanella pealeana (strain ATCC 700345 / ANG-SQ1).